The primary structure comprises 411 residues: MKKGKCVIFIIDGLGDRPNEKGLTPLKEAKTPTMDKIAKEGICGLMNAIDIGIRPGSDTAHLAILGYNPYEVYTGRGPLEAFGVGLDLKEGDIAFRCNFATVDENFVVLDRRAGRISPEEAEELEKEIDGLEIDGVKVIFKSSKGYRGALVLRGEGLSCRVSDGDPHEEGVKVSEIKPLDDSEEAKRTAEILNKLLKIVYEKLNNHPINEERRKKGLPPANIILPRGAGVVPKIEKFSEKYNMKGACICGTGLIKGMAKMIGLDVIEVEGATGTPKTNFMGKAKALVEALKEYDFVLVNVKGADEASHDGNYELKKEVLEKIDEMLAYVFEHINKDEVYFVLTGDHSTPIEMKDHSADPIPIVIWGKSVRVDDVTEFNEFACAKGALHWIKGEHVMKILLDLTGRNEKFGA.

It belongs to the BPG-independent phosphoglycerate mutase family. A-PGAM subfamily. Homotetramer. The cofactor is Mg(2+).

It catalyses the reaction (2R)-2-phosphoglycerate = (2R)-3-phosphoglycerate. Its pathway is carbohydrate degradation; glycolysis; pyruvate from D-glyceraldehyde 3-phosphate: step 3/5. Its activity is regulated as follows. Inhibited to approximately 20% by EDTA. Its function is as follows. Catalyzes the interconversion of 2-phosphoglycerate and 3-phosphoglycerate. This is 2,3-bisphosphoglycerate-independent phosphoglycerate mutase 1 (apgM1) from Methanocaldococcus jannaschii (strain ATCC 43067 / DSM 2661 / JAL-1 / JCM 10045 / NBRC 100440) (Methanococcus jannaschii).